The primary structure comprises 260 residues: Indole-3-glycerol phosphate synthase (260 aa).

The protein belongs to the TrpC family.

It catalyses the reaction 1-(2-carboxyphenylamino)-1-deoxy-D-ribulose 5-phosphate + H(+) = (1S,2R)-1-C-(indol-3-yl)glycerol 3-phosphate + CO2 + H2O. It functions in the pathway amino-acid biosynthesis; L-tryptophan biosynthesis; L-tryptophan from chorismate: step 4/5. This chain is Indole-3-glycerol phosphate synthase, found in Neisseria meningitidis serogroup C / serotype 2a (strain ATCC 700532 / DSM 15464 / FAM18).